The primary structure comprises 592 residues: UvrABC system protein C (592 aa).

The GIY-YIG domain maps to 14-91 (KKPGCYLWKN…IKKHKPRYNI (78 aa)). The region spanning 197 to 232 (DQVLKDLKEKESIASEKFDFEQAKKYLDLQKAINLI) is the UVR domain.

It belongs to the UvrC family. As to quaternary structure, interacts with UvrB in an incision complex.

The protein resides in the cytoplasm. In terms of biological role, the UvrABC repair system catalyzes the recognition and processing of DNA lesions. UvrC both incises the 5' and 3' sides of the lesion. The N-terminal half is responsible for the 3' incision and the C-terminal half is responsible for the 5' incision. This chain is UvrABC system protein C, found in Mycoplasmoides gallisepticum (strain R(low / passage 15 / clone 2)) (Mycoplasma gallisepticum).